A 355-amino-acid chain; its full sequence is Poly(3-hydroxyalkanoate) polymerase subunit PhaC (355 aa).

Residues 69–334 (PLLIVYALVN…LAFPGGHIGI (266 aa)) form the AB hydrolase-1 domain. The active site involves C149.

It belongs to the PHA/PHB synthase family. Type III PhaC subfamily. In terms of assembly, a large complex of PhaC and PhaE; the ratio of the subunits has been estimated to be from 1:1 to 4:1, with more PhaE than PhaC.

Its subcellular location is the cytoplasm. The catalysed reaction is (3R)-3-hydroxybutanoyl-CoA + [(3R)-hydroxybutanoate](n) = [(3R)-hydroxybutanoate](n+1) + CoA. It participates in biopolymer metabolism; poly-(R)-3-hydroxybutanoate biosynthesis. Polymerizes D(-)-3-hydroxybutyryl-CoA to create polyhydroxybutyrate (PHB) which consists of thousands of hydroxybutyrate molecules linked end to end. This subunit has catalytic activity that is enhanced 100-fold by PhaE, the non-catalytic subunit. This Allochromatium vinosum (strain ATCC 17899 / DSM 180 / NBRC 103801 / NCIMB 10441 / D) (Chromatium vinosum) protein is Poly(3-hydroxyalkanoate) polymerase subunit PhaC.